A 616-amino-acid polypeptide reads, in one-letter code: Chaperone protein HscA (616 aa).

This sequence belongs to the heat shock protein 70 family.

Chaperone involved in the maturation of iron-sulfur cluster-containing proteins. Has a low intrinsic ATPase activity which is markedly stimulated by HscB. Involved in the maturation of IscU. In Salmonella newport (strain SL254), this protein is Chaperone protein HscA.